The primary structure comprises 77 residues: Large ribosomal subunit protein bL28 (77 aa).

It belongs to the bacterial ribosomal protein bL28 family.

This chain is Large ribosomal subunit protein bL28, found in Paracidovorax citrulli (strain AAC00-1) (Acidovorax citrulli).